A 130-amino-acid chain; its full sequence is Small ribosomal subunit protein uS9 (130 aa).

This sequence belongs to the universal ribosomal protein uS9 family.

This is Small ribosomal subunit protein uS9 from Xanthomonas axonopodis pv. citri (strain 306).